A 239-amino-acid chain; its full sequence is Peptidyl-tRNA hydrolase (239 aa).

Tyr14 serves as a coordination point for tRNA. His19 functions as the Proton acceptor in the catalytic mechanism. TRNA-binding residues include Phe64, Asn66, and Asn112. Residues 199 to 227 (EKPAQKGRSHIRQARPKAPPAELPSSGPM) form a disordered region. Positions 203 to 213 (QKGRSHIRQAR) are enriched in basic residues.

This sequence belongs to the PTH family. Monomer.

The protein resides in the cytoplasm. It carries out the reaction an N-acyl-L-alpha-aminoacyl-tRNA + H2O = an N-acyl-L-amino acid + a tRNA + H(+). In terms of biological role, hydrolyzes ribosome-free peptidyl-tRNAs (with 1 or more amino acids incorporated), which drop off the ribosome during protein synthesis, or as a result of ribosome stalling. Its function is as follows. Catalyzes the release of premature peptidyl moieties from peptidyl-tRNA molecules trapped in stalled 50S ribosomal subunits, and thus maintains levels of free tRNAs and 50S ribosomes. The chain is Peptidyl-tRNA hydrolase from Chelativorans sp. (strain BNC1).